A 957-amino-acid chain; its full sequence is Isoleucine--tRNA ligase (957 aa).

The 'HIGH' region signature appears at 57–67 (PYANGDIHIGH). Glu594 lines the L-isoleucyl-5'-AMP pocket. A 'KMSKS' region motif is present at residues 635–639 (KMSKS). Position 638 (Lys638) interacts with ATP. Zn(2+) contacts are provided by Cys920, Cys923, Cys940, and Cys943.

The protein belongs to the class-I aminoacyl-tRNA synthetase family. IleS type 1 subfamily. As to quaternary structure, monomer. Zn(2+) serves as cofactor.

The protein resides in the cytoplasm. The enzyme catalyses tRNA(Ile) + L-isoleucine + ATP = L-isoleucyl-tRNA(Ile) + AMP + diphosphate. In terms of biological role, catalyzes the attachment of isoleucine to tRNA(Ile). As IleRS can inadvertently accommodate and process structurally similar amino acids such as valine, to avoid such errors it has two additional distinct tRNA(Ile)-dependent editing activities. One activity is designated as 'pretransfer' editing and involves the hydrolysis of activated Val-AMP. The other activity is designated 'posttransfer' editing and involves deacylation of mischarged Val-tRNA(Ile). This chain is Isoleucine--tRNA ligase, found in Laribacter hongkongensis (strain HLHK9).